Reading from the N-terminus, the 41-residue chain is uncharacterized protein (41 aa).

Residues Ile-8 to Phe-28 form a helical membrane-spanning segment.

It localises to the membrane. This is an uncharacterized protein from Streptococcus pneumoniae serotype 2 (strain D39 / NCTC 7466).